Consider the following 159-residue polypeptide: 2-C-methyl-D-erythritol 2,4-cyclodiphosphate synthase (159 aa).

Residues Asp10 and His12 each contribute to the a divalent metal cation site. 4-CDP-2-C-methyl-D-erythritol 2-phosphate is bound by residues 10 to 12 (DVH) and 36 to 37 (HS). His44 serves as a coordination point for a divalent metal cation. 4-CDP-2-C-methyl-D-erythritol 2-phosphate is bound by residues 58 to 60 (DIG), 63 to 67 (FPDTD), 102 to 108 (AQAPKMA), 134 to 137 (TTTE), Phe141, and Arg144.

It belongs to the IspF family. As to quaternary structure, homotrimer. A divalent metal cation is required as a cofactor.

The enzyme catalyses 4-CDP-2-C-methyl-D-erythritol 2-phosphate = 2-C-methyl-D-erythritol 2,4-cyclic diphosphate + CMP. Its pathway is isoprenoid biosynthesis; isopentenyl diphosphate biosynthesis via DXP pathway; isopentenyl diphosphate from 1-deoxy-D-xylulose 5-phosphate: step 4/6. Functionally, involved in the biosynthesis of isopentenyl diphosphate (IPP) and dimethylallyl diphosphate (DMAPP), two major building blocks of isoprenoid compounds. Catalyzes the conversion of 4-diphosphocytidyl-2-C-methyl-D-erythritol 2-phosphate (CDP-ME2P) to 2-C-methyl-D-erythritol 2,4-cyclodiphosphate (ME-CPP) with a corresponding release of cytidine 5-monophosphate (CMP). This chain is 2-C-methyl-D-erythritol 2,4-cyclodiphosphate synthase, found in Idiomarina loihiensis (strain ATCC BAA-735 / DSM 15497 / L2-TR).